Consider the following 617-residue polypeptide: ATP-dependent rRNA helicase SPB4 (617 aa).

Residues 7 to 35 carry the Q motif motif; the sequence is WADLDYELQPWIKKAINVSGFDSMTPVQA. The Helicase ATP-binding domain maps to 38-224; the sequence is IPMFAKNKDV…KTGLRNPVKI (187 aa). 51–58 lines the ATP pocket; sequence SVTGSGKT. The short motif at 172–175 is the DEAD box element; the sequence is DEAD. Residues 252-406 form the Helicase C-terminal domain; sequence NLIHIMNNIR…ETDINKNKIS (155 aa).

It belongs to the DEAD box helicase family. DDX55/SPB4 subfamily. As to quaternary structure, component of pre-60S ribosomal complexes.

It is found in the nucleus. Its subcellular location is the nucleolus. It carries out the reaction ATP + H2O = ADP + phosphate + H(+). In terms of biological role, ATP-binding RNA helicase involved in the biogenesis of 60S ribosomal subunits. Binds 90S pre-ribosomal particles and dissociates from pre-60S ribosomal particles after processing of 27SB pre-rRNA. Required for the normal formation of 18S rRNA through the processing of pre-rRNAs at sites A0, A1 and A2, and the normal formation of 25S and 5.8S rRNAs through the processing of pre-rRNAs at sites C1 and C2. This chain is ATP-dependent rRNA helicase SPB4, found in Candida glabrata (strain ATCC 2001 / BCRC 20586 / JCM 3761 / NBRC 0622 / NRRL Y-65 / CBS 138) (Yeast).